The sequence spans 105 residues: Met repressor (105 aa).

It belongs to the MetJ family. Homodimer.

It localises to the cytoplasm. This regulatory protein, when combined with SAM (S-adenosylmethionine) represses the expression of the methionine regulon and of enzymes involved in SAM synthesis. The sequence is that of Met repressor from Serratia proteamaculans (strain 568).